A 320-amino-acid chain; its full sequence is Cytochrome f (320 aa).

Residues 1–35 (MQTRKTLSWIKEEITRSISVSLMIYIITGAYISNA) form the signal peptide. Heme is bound by residues Tyr36, Cys56, Cys59, and His60. A helical transmembrane segment spans residues 286–306 (VQGLLFFLASVILAQIFLVLK).

Belongs to the cytochrome f family. In terms of assembly, the 4 large subunits of the cytochrome b6-f complex are cytochrome b6, subunit IV (17 kDa polypeptide, petD), cytochrome f and the Rieske protein, while the 4 small subunits are PetG, PetL, PetM and PetN. The complex functions as a dimer. Heme is required as a cofactor.

The protein resides in the plastid. It localises to the chloroplast thylakoid membrane. In terms of biological role, component of the cytochrome b6-f complex, which mediates electron transfer between photosystem II (PSII) and photosystem I (PSI), cyclic electron flow around PSI, and state transitions. The chain is Cytochrome f from Populus alba (White poplar).